Consider the following 174-residue polypeptide: Keratin-associated protein 9-2 (174 aa).

Tandem repeats lie at residues 8 to 12 (CCQPT), 13 to 17 (CCRTT), 18 to 22 (CCRTT), 37 to 41 (CCQPA), 42 to 46 (CCVSS), 51 to 55 (CCRPT), 61 to 65 (CCRTT), 66 to 70 (CCQPT), 75 to 79 (CCQPS), 80 to 84 (CCSTP), 85 to 89 (CCQPT), 90 to 94 (CCGSS), 95 to 99 (CCGQT), 144 to 148 (CCRPA), 149 to 153 (CCETT), 154 to 158 (CCRTT), and 168 to 172 (CCQPS). The tract at residues 8-172 (CCQPTCCRTT…TCVSSCCQPS (165 aa)) is 17 X 5 AA repeats of C-C-[RQVSGE]-[SPTQ]-[TASP].

This sequence belongs to the KRTAP type 9 family. Interacts with hair keratins.

Functionally, in the hair cortex, hair keratin intermediate filaments are embedded in an interfilamentous matrix, consisting of hair keratin-associated proteins (KRTAP), which are essential for the formation of a rigid and resistant hair shaft through their extensive disulfide bond cross-linking with abundant cysteine residues of hair keratins. The matrix proteins include the high-sulfur and high-glycine-tyrosine keratins. This Homo sapiens (Human) protein is Keratin-associated protein 9-2 (KRTAP9-2).